The sequence spans 128 residues: Small ribosomal subunit protein uS14m (128 aa).

The protein belongs to the universal ribosomal protein uS14 family. In terms of assembly, component of the mitochondrial ribosome small subunit (28S) which comprises a 12S rRNA and about 30 distinct proteins. Interacts with LIAT1.

The protein localises to the mitochondrion. The sequence is that of Small ribosomal subunit protein uS14m (MRPS14) from Bos taurus (Bovine).